Here is a 94-residue protein sequence, read N- to C-terminus: Neurotoxin LmNaTx45.2 (94 aa).

A signal peptide spans 1-18; it reads MKLAILSLFLVFQIGVES. The 67-residue stretch at 20-86 folds into the LCN-type CS-alpha/beta domain; that stretch reads KNGFALDHYG…IGDSRKNYCD (67 aa). Cystine bridges form between Cys-34/Cys-85, Cys-44/Cys-63, Cys-48/Cys-65, and Cys-59/Cys-85.

It belongs to the long (4 C-C) scorpion toxin superfamily. Sodium channel inhibitor family. Beta subfamily. Expressed by the venom gland.

It is found in the secreted. Its function is as follows. Binds voltage-independently at site-4 of sodium channels (Nav) and shift the voltage of activation toward more negative potentials thereby affecting sodium channel activation and promoting spontaneous and repetitive firing. This is Neurotoxin LmNaTx45.2 from Lychas mucronatus (Chinese swimming scorpion).